Here is a 226-residue protein sequence, read N- to C-terminus: MEVFMNLKKMAALRAVDEIDDGDVVGLGTGSTTHYFIEELGRRVREEGLEVMGVPTSYQSMFLAAESGIKVTSLAEHDVDVAVDGADEVDPDLNLIKGGGAAHTLEKIVDSSAASFIVIVDESKLVERLGAFPLPVEVIPAACRPVKLKLESMGASVNIRSSEGKDGPVVTDNGNFVLDAAFGVIDDPGAMESRLNNIPGVVENGIFAGIADMVIAGTSEGLKILR.

Residues 29–32 (TGST), 84–87 (DGAD), and 97–100 (KGGG) each bind substrate. Glutamate 106 serves as the catalytic Proton acceptor. Residue lysine 124 participates in substrate binding.

The protein belongs to the ribose 5-phosphate isomerase family. As to quaternary structure, homodimer.

The enzyme catalyses aldehydo-D-ribose 5-phosphate = D-ribulose 5-phosphate. Its pathway is carbohydrate degradation; pentose phosphate pathway; D-ribose 5-phosphate from D-ribulose 5-phosphate (non-oxidative stage): step 1/1. Functionally, catalyzes the reversible conversion of ribose-5-phosphate to ribulose 5-phosphate. The protein is Ribose-5-phosphate isomerase A of Methanothermobacter thermautotrophicus (strain ATCC 29096 / DSM 1053 / JCM 10044 / NBRC 100330 / Delta H) (Methanobacterium thermoautotrophicum).